Reading from the N-terminus, the 83-residue chain is Putative membrane protein insertion efficiency factor (83 aa).

Belongs to the UPF0161 family.

The protein localises to the cell membrane. Could be involved in insertion of integral membrane proteins into the membrane. The protein is Putative membrane protein insertion efficiency factor of Staphylococcus saprophyticus subsp. saprophyticus (strain ATCC 15305 / DSM 20229 / NCIMB 8711 / NCTC 7292 / S-41).